A 317-amino-acid polypeptide reads, in one-letter code: L-lactate dehydrogenase (317 aa).

Residues valine 17, aspartate 38, lysine 43, tyrosine 69, and 83-84 (GA) contribute to the NAD(+) site. Substrate-binding residues include glutamine 86 and arginine 92. Residues serine 105, 122 to 124 (ATN), and serine 147 contribute to the NAD(+) site. Residue 124–127 (NPVD) participates in substrate binding. 152 to 155 (DTAR) serves as a coordination point for substrate. 2 residues coordinate beta-D-fructose 1,6-bisphosphate: arginine 157 and histidine 172. Catalysis depends on histidine 179, which acts as the Proton acceptor. A Phosphotyrosine modification is found at tyrosine 224. Threonine 233 is a substrate binding site.

It belongs to the LDH/MDH superfamily. LDH family. Homotetramer.

It is found in the cytoplasm. The catalysed reaction is (S)-lactate + NAD(+) = pyruvate + NADH + H(+). The protein operates within fermentation; pyruvate fermentation to lactate; (S)-lactate from pyruvate: step 1/1. Allosterically activated by fructose 1,6-bisphosphate (FBP). Its function is as follows. Catalyzes the conversion of lactate to pyruvate. The protein is L-lactate dehydrogenase of Geobacillus thermodenitrificans (strain NG80-2).